We begin with the raw amino-acid sequence, 470 residues long: MASATKTLITELTPLDHLMPRTYVIGMNYIWPISRRSNIEDIHKHLKRGLEQTIKEIPFLGGSVVPTGSPGKFCIETLPGDFEGNQLIFNDLRTGSGNSWPNSYKNVRKARFPSTLFTDDCLSPVKGYMTRERLPVIAAQANFIDGGLILHLSVLHTACDVLAWNNILSILSKNVKASWPTEAEVSLNDDLQDYKVLPSFLDRSPLMRGNLNVERMDVREYKLQLANSKLEDPRNHLINPPPKSITEMENALFCISNSKLGELRDSISAEGSATSWLTVNDALAALMWCCVNRARISNGSQKLLRGNLSVAYDGRTVLDPPLPKRFMGNSALGFPITLDIHPKSVFEAALAISESRNDFNDKHIRDIIGFLDGLGDITQERVSYAKTLNPILVISNLKDMGFYEQDWGGSLGFPDALRMANPFLDYIPRVVPMPAQRNGNVYLIVWIEKSAAKRLREDETWNKWITPVFE.

The active-site Proton acceptor is the His-156.

This sequence belongs to the plant acyltransferase family.

It participates in polyketide biosynthesis. Acyltransferase; part of the gene cluster B that mediates the biosynthesis of botcinic acid and its botcinin derivatives, acetate-derived polyketides that contribute to virulence when combined with the sesquiterpene botrydial. Botcinic acid and its derivatives have been shown to induce chlorosis and necrosis during host plant infection, but also have antifungal activities. Two polyketide synthases, BOA6 and BOA9, are involved in the biosynthesis of botcinins. BOA6 mediates the formation of the per-methylated tetraketide core by condensation of four units of malonyl-CoA with one unit of acetyl-CoA, which would be methylated in activated methylene groups to yield a bicyclic acid intermediate that could then either be converted to botrylactone derivatives or lose the starter acetate unit through a retro-Claisen type C-C bond cleavage to yield botcinin derivatives. The second polyketide synthase, BOA9, is probably required for the biosynthesis of the tetraketide side chain of botcinins. The methyltransferase (MT) domain within BOA6 is probably responsible for the incorporation of four methyl groups. The trans-enoyl reductase BOA5 might take over the enoyl reductase function of BOA6 that misses an ER domain. The monooxygenases BOA2, BOA3 and BOA4 might be involved in further hydroxylations at C4, C5 and C8, whereas BOA7, close to BOA9, could potentially be involved in the hydroxylation at C4 in the side chain of botcinins. The sequence is that of Acyltransferase BOA11 from Botryotinia fuckeliana (strain B05.10) (Noble rot fungus).